A 369-amino-acid chain; its full sequence is Peptide chain release factor 2 (369 aa).

N5-methylglutamine is present on Q252.

The protein belongs to the prokaryotic/mitochondrial release factor family. Post-translationally, methylated by PrmC. Methylation increases the termination efficiency of RF2.

It localises to the cytoplasm. Its function is as follows. Peptide chain release factor 2 directs the termination of translation in response to the peptide chain termination codons UGA and UAA. The protein is Peptide chain release factor 2 of Staphylococcus aureus (strain MRSA252).